The sequence spans 234 residues: MAKLTKRMRVIRDKVDVTKQYDINEAVALLKELATAKFVESVDVAVNLGIDARKSDQNVRGATVLPHGTGRSVRVAVFTQGANAEAAKAAGAEFVGMEDLADQIKKGEMGFDVVIASPDAMRVVGQLGQLLGPRGLMPNPKVGTVTPNVAEAVNNAKAGQVRYRNDKNGIIHTTIGKVDFDSDKLKENLESLLVALKKAKPSQAKGVYIKKVSLSTTMGAGVSIDQSGLNAVAN.

The protein belongs to the universal ribosomal protein uL1 family. In terms of assembly, part of the 50S ribosomal subunit.

Functionally, binds directly to 23S rRNA. The L1 stalk is quite mobile in the ribosome, and is involved in E site tRNA release. Its function is as follows. Protein L1 is also a translational repressor protein, it controls the translation of the L11 operon by binding to its mRNA. This Pectobacterium atrosepticum (strain SCRI 1043 / ATCC BAA-672) (Erwinia carotovora subsp. atroseptica) protein is Large ribosomal subunit protein uL1.